A 169-amino-acid chain; its full sequence is MPESWVPAVGLTLVPSLGGFMGAYFVRGEGLRWYASLQKPSWHPPRWTLAPIWGTLYSAMGYGSYIVWKELGGFTEDAMVPLGLYTGQLALNWAWPPIFFGARQMGWALADLLLVSGVATATTLAWHRVSPPAARLLYPYLAWLAFATVLNYYVWRDNSGRRGGSRLPE.

Over 1–5 (MPESW) the chain is Mitochondrial intermembrane. The helical transmembrane segment at 6 to 26 (VPAVGLTLVPSLGGFMGAYFV) threads the bilayer. At 27 to 46 (RGEGLRWYASLQKPSWHPPR) the chain is on the cytoplasmic side. The chain crosses the membrane as a helical span at residues 47-67 (WTLAPIWGTLYSAMGYGSYIV). Residues 68-79 (WKELGGFTEDAM) are Mitochondrial intermembrane-facing. The helical transmembrane segment at 80 to 100 (VPLGLYTGQLALNWAWPPIFF) threads the bilayer. Residues 101 to 105 (GARQM) are Cytoplasmic-facing. A helical transmembrane segment spans residues 106–126 (GWALADLLLVSGVATATTLAW). Residues 127-134 (HRVSPPAA) are Mitochondrial intermembrane-facing. The chain crosses the membrane as a helical span at residues 135 to 155 (RLLYPYLAWLAFATVLNYYVW). Residues 156–169 (RDNSGRRGGSRLPE) are Cytoplasmic-facing.

Belongs to the TspO/BZRP family. As to quaternary structure, interacts with TSPOAP1. Interacts with MOST-1. May interact with STAR. In terms of tissue distribution, detected in liver (at protein level). Ubiquitous.

It localises to the mitochondrion membrane. Its subcellular location is the membrane. Its function is as follows. Can bind protoporphyrin IX and may play a role in the transport of porphyrins and heme. Was initially identified as peripheral-type benzodiazepine receptor; can also bind isoquinoline carboxamides. Promotes the transport of cholesterol across mitochondrial membranes and may play a role in lipid metabolism, but its precise physiological role is controversial. According to some reports, it is not required for steroid hormone biosynthesis. The polypeptide is Translocator protein (Tspo) (Mus musculus (Mouse)).